The chain runs to 154 residues: Protein X (154 aa).

The mitochondrial targeting sequence stretch occupies residues proline 68–phenylalanine 117.

This sequence belongs to the orthohepadnavirus protein X family. As to quaternary structure, may form homodimer. May interact with host CEBPA, CFLAR, CREB1, DDB1, E4F1, HBXIP, HSPD1/HSP60, NFKBIA, POLR2E and SMAD4. Interacts with host SMC5-SMC6 complex and induces its degradation. Interacts with host TRPC4AP; leading to prevent ubiquitination of TRPC4AP. Interacts with host PLSCR1; this interaction promotes ubiquitination and degradation of HBx and impairs HBx-mediated cell proliferation. In terms of processing, a fraction may be phosphorylated in insect cells and HepG2 cells, a human hepatoblastoma cell line. Phosphorylated in vitro by host protein kinase C or mitogen-activated protein kinase. N-acetylated in insect cells.

The protein localises to the host cytoplasm. The protein resides in the host nucleus. Its subcellular location is the host mitochondrion. Multifunctional protein that plays a role in silencing host antiviral defenses and promoting viral transcription. Does not seem to be essential for HBV infection. May be directly involved in development of cirrhosis and liver cancer (hepatocellular carcinoma). Most of cytosolic activities involve modulation of cytosolic calcium. The effect on apoptosis is controversial depending on the cell types in which the studies have been conducted. May induce apoptosis by localizing in mitochondria and causing loss of mitochondrial membrane potential. May also modulate apoptosis by binding host CFLAR, a key regulator of the death-inducing signaling complex (DISC). Promotes viral transcription by using the host E3 ubiquitin ligase DDB1 to target the SMC5-SMC6 complex to proteasomal degradation. This host complex would otherwise bind to viral episomal DNA, and prevents its transcription. Moderately stimulates transcription of many different viral and cellular transcription elements. Promoters and enhancers stimulated by HBx contain DNA binding sites for NF-kappa-B, AP-1, AP-2, c-EBP, ATF/CREB, or the calcium-activated factor NF-AT. The protein is Protein X of Hepatitis B virus genotype D (isolate France/alpha1/1989) (HBV-D).